Here is a 110-residue protein sequence, read N- to C-terminus: UPF0060 membrane protein BPSL1340 (110 aa).

The next 4 membrane-spanning stretches (helical) occupy residues 9-29, 34-54, 64-84, and 86-106; these read ALFVLTAVAEIVGCYLPWLVL, PAWLLAPAALSLALFAWLLTL, AAYGGVYIAVALAWLRIVDGV, and LSRWDVAGAALALAGMSVIAL.

The protein belongs to the UPF0060 family.

The protein localises to the cell inner membrane. The chain is UPF0060 membrane protein BPSL1340 from Burkholderia pseudomallei (strain K96243).